The following is a 474-amino-acid chain: Lysosomal protective protein (474 aa).

The N-terminal stretch at 1–23 is a signal peptide; sequence MPGTALSPLLLLLLLSWASRNEA. 4 cysteine pairs are disulfide-bonded: C83-C356, C235-C251, C236-C241, and C276-C325. N140 is a glycosylation site (N-linked (GlcNAc...) (high mannose) asparagine). Residue S173 is part of the active site. N-linked (GlcNAc...) (high mannose) asparagine glycosylation occurs at N327. Active-site residues include D394 and H451.

Belongs to the peptidase S10 family. Heterodimer of a 32 kDa chain and a 20 kDa chain; disulfide-linked.

The protein resides in the lysosome. The catalysed reaction is Release of a C-terminal amino acid with broad specificity.. Protective protein appears to be essential for both the activity of beta-galactosidase and neuraminidase, it associates with these enzymes and exerts a protective function necessary for their stability and activity. This protein is also a carboxypeptidase and can deamidate tachykinins. In Mus musculus (Mouse), this protein is Lysosomal protective protein (Ctsa).